A 281-amino-acid chain; its full sequence is Arylamine N-acetyltransferase (281 aa).

The Acyl-thioester intermediate role is filled by Cys-69. Residues His-107 and Asp-122 contribute to the active site. An N6-acetyllysine mark is found at Lys-214 and Lys-281.

It belongs to the arylamine N-acetyltransferase family. Homodimer. In terms of processing, acetylated on Lys-214 and Lys-281. Deacetylated by CobB.

Its subcellular location is the cytoplasm. The enzyme catalyses an arylamine + acetyl-CoA = an N-acetylarylamine + CoA. The catalysed reaction is an N-hydroxyarylamine + acetyl-CoA = an N-acetoxyarylamine + CoA. Inhibited by salicylic acid, acetylsalicylic acid, 2,6-dichrolo-4-nitrophenol, N-ethylmaleimide and iodoacetamide. Catalyzes the acetyl-CoA-dependent N-acetylation of aromatic amines, and, probably, the O-acetylation of N-hydroxyarylamines. In vitro, catalyzes the N-acetylation of various arylamines such as aminobenzoic acid, aminophenol, aminotoluene, phenetidine, anisidine, aniline, isoniazid and 2-amino-fluorene. N-hydroxyarylamine O-acetyltransferase activity has not been assayed directly, however, NhoA activity is required for the mutagenicity of nitroaromatic compounds, suggesting that it also has O-acetyltransferase activity. This Escherichia coli (strain K12) protein is Arylamine N-acetyltransferase (nhoA).